The primary structure comprises 208 residues: Ribosome maturation factor RimM (208 aa).

The region spanning 98–205 is the PRC barrel domain; it reads ADEFYVPDLI…IIEITPPDGL (108 aa). The segment at 154-174 is disordered; the sequence is LPSKSKRSRDTKNQKKNQSPP.

The protein belongs to the RimM family. In terms of assembly, binds ribosomal protein uS19.

Its subcellular location is the cytoplasm. Functionally, an accessory protein needed during the final step in the assembly of 30S ribosomal subunit, possibly for assembly of the head region. Essential for efficient processing of 16S rRNA. May be needed both before and after RbfA during the maturation of 16S rRNA. It has affinity for free ribosomal 30S subunits but not for 70S ribosomes. The chain is Ribosome maturation factor RimM from Trichodesmium erythraeum (strain IMS101).